The sequence spans 187 residues: UPF0301 protein YE3428 (187 aa).

This sequence belongs to the UPF0301 (AlgH) family.

The protein is UPF0301 protein YE3428 of Yersinia enterocolitica serotype O:8 / biotype 1B (strain NCTC 13174 / 8081).